The following is a 441-amino-acid chain: Eukaryotic translation initiation factor 3 subunit E (441 aa).

In terms of domain architecture, PCI spans 223–407 (IFFNHDNGRT…GTVIMEPTQP (185 aa)).

Belongs to the eIF-3 subunit E family. Component of the eukaryotic translation initiation factor 3 (eIF-3) complex (Potential). Binds to the translation initiation factors TIF3F1 and TIF3H1. Associates with the CSN (COP9 signalosome) complex. Interacts directly with CSN1, CSN4, CSN6A, CSN6B, CSN7, CSN8 and TIF3C1. Binds to 40S small ribosomal subunit S9 (RPS9B and RPS9C) via its N-terminal part. Interacts with the 26S proteasome subunit RPN12a via its C-terminal part. Also binds with At1g27930 and At4g30620.

The protein resides in the cytoplasm. It is found in the nucleus. Functionally, component of the eukaryotic translation initiation factor 3 (eIF-3) complex, which is involved in protein synthesis of a specialized repertoire of mRNAs and, together with other initiation factors, stimulates binding of mRNA and methionyl-tRNAi to the 40S ribosome. The eIF-3 complex specifically targets and initiates translation of a subset of mRNAs involved in cell proliferation (Potential). Negatively regulates translation during flower development. The polypeptide is Eukaryotic translation initiation factor 3 subunit E (Arabidopsis thaliana (Mouse-ear cress)).